Reading from the N-terminus, the 493-residue chain is Kelch-like protein 42 (493 aa).

Residues 5–77 enclose the BTB domain; that stretch reads EMVQIRLEDR…INAGGAREGW (73 aa). Kelch repeat units follow at residues 183 to 241, 242 to 289, 291 to 332, 334 to 379, 381 to 436, and 438 to 487; these read VLVA…ILDN, YLFI…AVNS, LYAI…ECKG, IYVI…SVEE, IYIV…ALHN, and GIYI…SLYL.

Component of the BCR(KLHL42) E3 ubiquitin ligase complex, at least composed of CUL3 and KLHL42. Interacts (via the BTB domain) with CUL3. Interacts (via the kelch domains) with KATNA1.

It is found in the cytoplasm. The protein resides in the cytoskeleton. The protein localises to the spindle. Its pathway is protein modification; protein ubiquitination. Functionally, substrate-specific adapter of a BCR (BTB-CUL3-RBX1) E3 ubiquitin-protein ligase complex required for mitotic progression and cytokinesis. The BCR(KLHL42) E3 ubiquitin ligase complex mediates the ubiquitination and subsequent degradation of KATNA1. Involved in microtubule dynamics throughout mitosis. The protein is Kelch-like protein 42 (Klhl42) of Mus musculus (Mouse).